A 411-amino-acid polypeptide reads, in one-letter code: Dual-specificity RNA methyltransferase RlmN (411 aa).

Glu124 functions as the Proton acceptor in the catalytic mechanism. The region spanning Glu130 to Leu379 is the Radical SAM core domain. Cys137 and Cys382 are joined by a disulfide. Cys144, Cys148, and Cys151 together coordinate [4Fe-4S] cluster. S-adenosyl-L-methionine is bound by residues Gly208–Glu209, Ser240, Ser262–His264, and Asn339. The active-site S-methylcysteine intermediate is the Cys382.

Belongs to the radical SAM superfamily. RlmN family. [4Fe-4S] cluster is required as a cofactor.

It is found in the cytoplasm. It catalyses the reaction adenosine(2503) in 23S rRNA + 2 reduced [2Fe-2S]-[ferredoxin] + 2 S-adenosyl-L-methionine = 2-methyladenosine(2503) in 23S rRNA + 5'-deoxyadenosine + L-methionine + 2 oxidized [2Fe-2S]-[ferredoxin] + S-adenosyl-L-homocysteine. The enzyme catalyses adenosine(37) in tRNA + 2 reduced [2Fe-2S]-[ferredoxin] + 2 S-adenosyl-L-methionine = 2-methyladenosine(37) in tRNA + 5'-deoxyadenosine + L-methionine + 2 oxidized [2Fe-2S]-[ferredoxin] + S-adenosyl-L-homocysteine. Its function is as follows. Specifically methylates position 2 of adenine 2503 in 23S rRNA and position 2 of adenine 37 in tRNAs. m2A2503 modification seems to play a crucial role in the proofreading step occurring at the peptidyl transferase center and thus would serve to optimize ribosomal fidelity. The sequence is that of Dual-specificity RNA methyltransferase RlmN from Sinorhizobium fredii (strain NBRC 101917 / NGR234).